A 429-amino-acid chain; its full sequence is Serine--tRNA ligase (429 aa).

235–237 (TAE) contacts L-serine. ATP is bound at residue 266–268 (RSE). L-serine is bound at residue Glu-289. 353–356 (EISS) contacts ATP. Ser-389 is an L-serine binding site.

Belongs to the class-II aminoacyl-tRNA synthetase family. Type-1 seryl-tRNA synthetase subfamily. Homodimer. The tRNA molecule binds across the dimer.

It is found in the cytoplasm. It carries out the reaction tRNA(Ser) + L-serine + ATP = L-seryl-tRNA(Ser) + AMP + diphosphate + H(+). The catalysed reaction is tRNA(Sec) + L-serine + ATP = L-seryl-tRNA(Sec) + AMP + diphosphate + H(+). The protein operates within aminoacyl-tRNA biosynthesis; selenocysteinyl-tRNA(Sec) biosynthesis; L-seryl-tRNA(Sec) from L-serine and tRNA(Sec): step 1/1. Its function is as follows. Catalyzes the attachment of serine to tRNA(Ser). Is also able to aminoacylate tRNA(Sec) with serine, to form the misacylated tRNA L-seryl-tRNA(Sec), which will be further converted into selenocysteinyl-tRNA(Sec). This is Serine--tRNA ligase from Haemophilus influenzae (strain 86-028NP).